The following is a 144-amino-acid chain: Small ribosomal subunit protein bS6 (144 aa).

The segment at glutamate 95 to glutamate 144 is disordered. Residues lysine 107 to glutamate 144 show a composition bias toward basic and acidic residues.

It belongs to the bacterial ribosomal protein bS6 family.

Functionally, binds together with bS18 to 16S ribosomal RNA. The polypeptide is Small ribosomal subunit protein bS6 (Paramagnetospirillum magneticum (strain ATCC 700264 / AMB-1) (Magnetospirillum magneticum)).